The primary structure comprises 534 residues: Phenylalanine N-monooxygenase CYP79D16 (534 aa).

The signal sequence occupies residues 1–21 (MEANVGFLTLCLAITLVRFLM). Residue Cys-472 coordinates heme. An N-linked (GlcNAc...) asparagine glycan is attached at Asn-500.

The protein belongs to the cytochrome P450 family. Requires heme as cofactor. Expressed in seedlings.

It catalyses the reaction L-phenylalanine + 2 reduced [NADPH--hemoprotein reductase] + 2 O2 = (E)-phenylacetaldehyde oxime + 2 oxidized [NADPH--hemoprotein reductase] + CO2 + 3 H2O + 2 H(+). Involved in L-phenylalanine-derived cyanogenic glycoside biosynthesis, including prunasin and amygdalin defensive agents. Catalyzes the conversion of L-phenylalanine (Phe) into phenylacetaldoxime (PAOx). Cannot use tyrosine (Tyr), tryptophan (Trp) and valine (Val) as substrates. This chain is Phenylalanine N-monooxygenase CYP79D16, found in Prunus mume (Japanese apricot).